Consider the following 81-residue polypeptide: UPF0349 protein SE_0633 (81 aa).

Belongs to the UPF0349 family.

This Staphylococcus epidermidis (strain ATCC 12228 / FDA PCI 1200) protein is UPF0349 protein SE_0633.